Reading from the N-terminus, the 575-residue chain is MKKEEWILPYIKQNARLFVLVIFLGAVTIFSAAFLMFTSGFLISKAATRPENILLIYVPIVAVRTFGIARSVSRYVERLVGHHIILKIVSDMRVRLYNMLEPGALMLRSRFRTGDMLGILSEDIEHLQDAFLKTIFPAISALLLYAVSVIALGFFSWPFAILLALYLFVLVVLFPVVSLLVTRAKNAKLKSGRNVLYSRLTDAVMGVSDWMFSGRRHAFIDAYEKEERDWFELERKKQRFTRWRDFAAQCLVAGLILLMLFWTAGQQADGELAKTMIAAFVLVVFPLTEAFLPLSDALGEVPGYQDSIRRMNNVAPQPEASQTESGDQILDLQDVTLAFRDVTFSYDNSSQVLHNFSFTLRQGEKMALLGRSGSGKSTSLALIEGALKPDSGSVTLNGVETALLKDQIADAVAVLNQKPHLFDTSILNNIRLGNGEASDEDVRRAAKQVKLHDYIESLPDGYHTSVQETGIRFSGGERQRIALARILLQDTPIIILDEPTVGLDPITERELMETVFEVLKGKTILWITHHLAGVEAADKIVFLENGKTEMEGTHEELLAANERYRRLYHLDVPVK.

Transmembrane regions (helical) follow at residues 17–37 (LFVL…FLMF), 53–73 (ILLI…RSVS), 135–155 (IFPA…LGFF), 161–181 (ILLA…SLLV), 246–266 (FAAQ…TAGQ), and 275–295 (TMIA…LPLS). The 285-residue stretch at 19 to 303 (VLVIFLGAVT…LSDALGEVPG (285 aa)) folds into the ABC transmembrane type-1 domain. An ABC transporter domain is found at 337–570 (LAFRDVTFSY…NERYRRLYHL (234 aa)). An ATP-binding site is contributed by 370–377 (GRSGSGKS).

It belongs to the ABC transporter superfamily. Cysteine exporter (TC 3.A.1.129.1) family. In terms of assembly, forms a heterodimer with CydC.

Its subcellular location is the cell membrane. The catalysed reaction is L-cysteine(in) + ATP + H2O = L-cysteine(out) + ADP + phosphate + H(+). It catalyses the reaction glutathione(in) + ATP + H2O = glutathione(out) + ADP + phosphate + H(+). In terms of biological role, part of the ABC transporter complex CydDC that exports the reduced low-molecular-weight thiols cysteine and glutathione from the cell. Export of these thiol-containing redox-active molecules may be crucial for redox homeostasis, permitting correct assembly of various respiratory complexes and formation of correct disulfide bonds in secreted proteins. CydD contains transmembrane domains (TMD), which form a pore in the membrane, and an ATP-binding domain (NBD), which is responsible for energy generation. This chain is Glutathione/L-cysteine transport system ATP-binding/permease protein CydD (cydD), found in Bacillus subtilis (strain 168).